A 158-amino-acid chain; its full sequence is 2-C-methyl-D-erythritol 2,4-cyclodiphosphate synthase (158 aa).

Residues Asp9 and His11 each coordinate a divalent metal cation. Residues 9-11 and 35-36 contribute to the 4-CDP-2-C-methyl-D-erythritol 2-phosphate site; these read DVH and HS. His43 is an a divalent metal cation binding site. 4-CDP-2-C-methyl-D-erythritol 2-phosphate-binding positions include 57 to 59, 62 to 66, 101 to 107, 133 to 136, Phe140, and Arg143; these read DIG, FPDTD, AQKPKMA, and TTTE.

Belongs to the IspF family. Homotrimer. A divalent metal cation is required as a cofactor.

The catalysed reaction is 4-CDP-2-C-methyl-D-erythritol 2-phosphate = 2-C-methyl-D-erythritol 2,4-cyclic diphosphate + CMP. Its pathway is isoprenoid biosynthesis; isopentenyl diphosphate biosynthesis via DXP pathway; isopentenyl diphosphate from 1-deoxy-D-xylulose 5-phosphate: step 4/6. In terms of biological role, involved in the biosynthesis of isopentenyl diphosphate (IPP) and dimethylallyl diphosphate (DMAPP), two major building blocks of isoprenoid compounds. Catalyzes the conversion of 4-diphosphocytidyl-2-C-methyl-D-erythritol 2-phosphate (CDP-ME2P) to 2-C-methyl-D-erythritol 2,4-cyclodiphosphate (ME-CPP) with a corresponding release of cytidine 5-monophosphate (CMP). This Geobacillus sp. (strain WCH70) protein is 2-C-methyl-D-erythritol 2,4-cyclodiphosphate synthase.